We begin with the raw amino-acid sequence, 498 residues long: ATP synthase subunit beta, chloroplastic (498 aa).

Residue 172-179 (GGAGVGKT) coordinates ATP.

The protein belongs to the ATPase alpha/beta chains family. F-type ATPases have 2 components, CF(1) - the catalytic core - and CF(0) - the membrane proton channel. CF(1) has five subunits: alpha(3), beta(3), gamma(1), delta(1), epsilon(1). CF(0) has four main subunits: a(1), b(1), b'(1) and c(9-12).

It localises to the plastid. The protein resides in the chloroplast thylakoid membrane. The enzyme catalyses ATP + H2O + 4 H(+)(in) = ADP + phosphate + 5 H(+)(out). Functionally, produces ATP from ADP in the presence of a proton gradient across the membrane. The catalytic sites are hosted primarily by the beta subunits. The chain is ATP synthase subunit beta, chloroplastic from Triticum aestivum (Wheat).